A 298-amino-acid polypeptide reads, in one-letter code: Golgi to ER traffic protein 2 (298 aa).

The Cytoplasmic portion of the chain corresponds to 1–164 (MSEPVVDTAE…LEYNTYNQKL (164 aa)). Residues 40 to 92 (ILSQGSSVKTSGVKSVLDQEKEATPSHDEDPEIQDITEITTPPPRTPPIGEDA) form a disordered region. The segment covering 42-55 (SQGSSVKTSGVKSV) has biased composition (low complexity). A compositionally biased stretch (basic and acidic residues) spans 56-67 (LDQEKEATPSHD). A helical transmembrane segment spans residues 165–185 (WKFRFLLVRVSVTLFNFFYHY). The Lumenal segment spans residues 186–211 (INLSNFHASNYAYVRDLSSEKYPVRD). The helical transmembrane segment at 212–231 (FFTWFATTEVVLVAAYYSIF) threads the bilayer. Residues 232-275 (HSLGLFHAANQNSFVLKAMSMGSMVLPQLEHYKPLVARFLGYYE) lie on the Cytoplasmic side of the membrane. Residues 276 to 296 (LLGIVLGDLSLVIVLFGLLSF) form a helical membrane-spanning segment. Topologically, residues 297–298 (AN) are lumenal.

The protein belongs to the GET2 family. In terms of assembly, component of the Golgi to ER traffic (GET) complex, which is composed of GET1, GET2 and GET3. Within the complex, GET1 and GET2 form a heterotetramer which is stabilized by phosphatidylinositol binding and which binds to the GET3 homodimer.

The protein localises to the endoplasmic reticulum membrane. It is found in the golgi apparatus membrane. Functionally, required for the post-translational delivery of tail-anchored (TA) proteins to the endoplasmic reticulum. Together with GET1, acts as a membrane receptor for soluble GET3, which recognizes and selectively binds the transmembrane domain of TA proteins in the cytosol. The GET complex cooperates with the HDEL receptor ERD2 to mediate the ATP-dependent retrieval of resident ER proteins that contain a C-terminal H-D-E-L retention signal from the Golgi to the ER. This Candida albicans (strain SC5314 / ATCC MYA-2876) (Yeast) protein is Golgi to ER traffic protein 2.